Here is a 225-residue protein sequence, read N- to C-terminus: Large ribosomal subunit protein uL4 (225 aa).

Residues 46 to 102 are disordered; that stretch reads KRQGTHATKGRGEVRGGGRKPFRQKGTGRARQGSIRAPHFTGGGTVHGPQPRDYSQR. The segment covering 62-73 has biased composition (basic residues); the sequence is GGRKPFRQKGTG.

Belongs to the universal ribosomal protein uL4 family. Part of the 50S ribosomal subunit.

One of the primary rRNA binding proteins, this protein initially binds near the 5'-end of the 23S rRNA. It is important during the early stages of 50S assembly. It makes multiple contacts with different domains of the 23S rRNA in the assembled 50S subunit and ribosome. Its function is as follows. Forms part of the polypeptide exit tunnel. In Corynebacterium urealyticum (strain ATCC 43042 / DSM 7109), this protein is Large ribosomal subunit protein uL4.